The primary structure comprises 290 residues: Formamidopyrimidine-DNA glycosylase (290 aa).

Pro-2 (schiff-base intermediate with DNA) is an active-site residue. Residue Glu-3 is the Proton donor of the active site. Lys-58 acts as the Proton donor; for beta-elimination activity in catalysis. DNA-binding residues include His-97, Arg-122, and Lys-165. The FPG-type; atypical zinc-finger motif lies at 250–290 (KVYGREGEPCPGCDCDPVRTGGIARIVQSGRSTFYCPRHQR). Arg-280 acts as the Proton donor; for delta-elimination activity in catalysis.

This sequence belongs to the FPG family. Monomer. The cofactor is Zn(2+).

It catalyses the reaction Hydrolysis of DNA containing ring-opened 7-methylguanine residues, releasing 2,6-diamino-4-hydroxy-5-(N-methyl)formamidopyrimidine.. The enzyme catalyses 2'-deoxyribonucleotide-(2'-deoxyribose 5'-phosphate)-2'-deoxyribonucleotide-DNA = a 3'-end 2'-deoxyribonucleotide-(2,3-dehydro-2,3-deoxyribose 5'-phosphate)-DNA + a 5'-end 5'-phospho-2'-deoxyribonucleoside-DNA + H(+). In terms of biological role, involved in base excision repair of DNA damaged by oxidation or by mutagenic agents. Acts as a DNA glycosylase that recognizes and removes damaged bases. Has a preference for oxidized purines, such as 7,8-dihydro-8-oxoguanine (8-oxoG). Has AP (apurinic/apyrimidinic) lyase activity and introduces nicks in the DNA strand. Cleaves the DNA backbone by beta-delta elimination to generate a single-strand break at the site of the removed base with both 3'- and 5'-phosphates. This is Formamidopyrimidine-DNA glycosylase from Rhodospirillum centenum (strain ATCC 51521 / SW).